The following is a 457-amino-acid chain: MKNYPVKKNDVIEVEIIDLTHEGLGVAKVDHYPLFIENALPGEKLEIKVLKTGKSFGYGKVLTVLKSSEQRVPVKDENFTKVGISPLQHLAYGAQLSFKTQQVENVMQRVAKLQEVPVLPTIGMNDPWHYRNKAQIPVRKIDNQLQTGFFRKNSHDLIPMEHFYIQDPEIDAAIVKIRDIMRKYSVKPYNESDNTGNLRHIVVRRGYHTGEMMVVLITRTPKLFPISKIVPDILEAIPEVVSIVQNVNPKRTNVIFGDETILLHGSEKITDTIFDLKFEISARSFYQVNPQQTEVMYQKVKEYAALTGNEIVVDAYCGIGTIGLTLAQDAKQVYGIEVIEEAVKDAENNAKLNNIENATFTAGLAEELLPKLVENGLQPDVVVVDPPRKGLDGQLVNTLIETQPERIVYVSCNPATLARDIALLTEGGYEAKEIQPVDNFPQTTHIESVTLLTKAVD.

The TRAM domain occupies 5-63; the sequence is PVKKNDVIEVEIIDLTHEGLGVAKVDHYPLFIENALPGEKLEIKVLKTGKSFGYGKVLT. The S-adenosyl-L-methionine site is built by Gln287, Tyr316, Glu337, and Asp385. The Nucleophile role is filled by Cys412.

Belongs to the class I-like SAM-binding methyltransferase superfamily. RNA M5U methyltransferase family.

This is an uncharacterized protein from Enterococcus faecalis (strain ATCC 700802 / V583).